The chain runs to 1023 residues: Sodium/potassium-transporting ATPase subunit alpha-1 (1023 aa).

Residues 1 to 5 constitute a propeptide that is removed on maturation; that stretch reads MGKGV. A compositionally biased stretch (basic and acidic residues) spans 1–11; the sequence is MGKGVGRDKYE. The tract at residues 1-38 is disordered; it reads MGKGVGRDKYEPAAVSEHGDKKSKKAKKERDMDELKKE. Residues 6–87 are Cytoplasmic-facing; sequence GRDKYEPAAV…NALTPPPTTP (82 aa). Residue Lys-9 is modified to N6-acetyllysine. Tyr-10 carries the post-translational modification Phosphotyrosine. Position 16 is a phosphoserine; by PKC (Ser-16). Lys-21 carries the post-translational modification N6-acetyllysine. Ser-23 bears the Phosphoserine; by PKC mark. Residues 28–38 are compositionally biased toward basic and acidic residues; the sequence is KERDMDELKKE. Phosphoserine occurs at positions 40 and 47. The segment at 82 to 84 is phosphoinositide-3 kinase binding; that stretch reads PPP. A helical transmembrane segment spans residues 88–108; that stretch reads EWVKFCRQLFGGFSMLLWIGA. Topologically, residues 109–131 are extracellular; that stretch reads ILCFLAYGIRSATEEEPPNDDLY. Residues 132–152 traverse the membrane as a helical segment; the sequence is LGVVLSAVVIITGCFSYYQEA. Residues 153–288 are Cytoplasmic-facing; that stretch reads KSSKIMESFK…GGQTPIAEEI (136 aa). The segment at 216-235 is disordered; it reads SSLTGESEPQTRSPDFTNEN. The residue at position 228 (Ser-228) is a Phosphoserine. Tyr-260 is modified (phosphotyrosine). The chain crosses the membrane as a helical span at residues 289-308; it reads EHFIHLITGVAVFLGVSFFI. The Extracellular portion of the chain corresponds to 309-320; sequence LSLILEYTWLEA. Residues 321-338 traverse the membrane as a helical segment; that stretch reads VIFLIGIIVANVPEGLLA. Residues 339–772 lie on the Cytoplasmic side of the membrane; the sequence is TVTVCLTLTA…EEGRLIFDNL (434 aa). Asp-376 serves as the catalytic 4-aspartylphosphate intermediate. Ser-452 and Ser-484 each carry phosphoserine. An ATP-binding site is contributed by Lys-487. Tyr-542 carries the post-translational modification Phosphotyrosine. The interval 596–717 is mediates interaction with SCN7A; that stretch reads RAAVPDAVGK…QGAIVAVTGD (122 aa). N6-succinyllysine is present on Lys-661. A phosphoserine mark is found at Ser-668 and Ser-675. Mg(2+) contacts are provided by Asp-717 and Asp-721. The helical transmembrane segment at 773–792 threads the bilayer; that stretch reads KKSIAYTLTSNIPEITPFLI. The Extracellular portion of the chain corresponds to 793-802; the sequence is FIIANIPLPL. Residues 803–823 traverse the membrane as a helical segment; sequence GTVTILCIDLGTDMVPAISLA. Over 824–843 the chain is Cytoplasmic; sequence YEQAESDIMKRQPRNPKTDK. Residues 844-866 traverse the membrane as a helical segment; sequence LVNERLISMAYGQIGMIQALGGF. The Extracellular portion of the chain corresponds to 867–918; sequence FTYFVILAENGFLPFHLLGIRETWDDRWINDVEDSYGQQWTYEQRKIVEFTC. Residues 919 to 938 form a helical membrane-spanning segment; that stretch reads HTAFFVSIVVVQWADLVICK. Residues 939–951 lie on the Cytoplasmic side of the membrane; it reads TRRNSVFQQGMKN. At Ser-943 the chain carries Phosphoserine; by PKA. Residues 952–970 traverse the membrane as a helical segment; sequence KILIFGLFEETALAAFLSY. Residues 971-985 are Extracellular-facing; that stretch reads CPGMGAALRMYPLKP. Residues 986–1006 traverse the membrane as a helical segment; sequence TWWFCAFPYSLLIFVYDEVRK. At 1007 to 1023 the chain is on the cytoplasmic side; sequence LIIRRRPGGWVEKETYY.

Belongs to the cation transport ATPase (P-type) (TC 3.A.3) family. Type IIC subfamily. As to quaternary structure, the sodium/potassium-transporting ATPase is composed of a catalytic alpha subunit, an auxiliary non-catalytic beta subunit and an additional regulatory subunit. Interacts with regulatory subunit FXYD1. Interacts with regulatory subunit FXYD3. Interacts with SLC35G1 and STIM1. Interacts with SIK1. Interacts with CLN3; this interaction regulates the sodium/potassium-transporting ATPase complex localization at the plasma membrane. Interacts with SCN7A; activates ATP1A1 P-type sodium:potassium-exchanging transporter activity which indirectly signals to nearby neurons to regulate sodium homeostasis. Phosphorylation on Tyr-10 modulates pumping activity. Phosphorylation of Ser-943 by PKA modulates the response of ATP1A1 to PKC. Dephosphorylation by protein phosphatase 2A (PP2A) following increases in intracellular sodium, leading to increase catalytic activity. As to expression, expressed in the central nervous system, in most motor and sensory axons of the ventral and dorsal roots, as well as in the large motor neurons of the ventral horn (at protein level).

The protein resides in the cell membrane. Its subcellular location is the basolateral cell membrane. It is found in the sarcolemma. It localises to the cell projection. The protein localises to the axon. The protein resides in the melanosome. The catalysed reaction is K(+)(out) + Na(+)(in) + ATP + H2O = K(+)(in) + Na(+)(out) + ADP + phosphate + H(+). This is the catalytic component of the active enzyme, which catalyzes the hydrolysis of ATP coupled with the exchange of sodium and potassium ions across the plasma membrane. This action creates the electrochemical gradient of sodium and potassium ions, providing the energy for active transport of various nutrients. Could also be part of an osmosensory signaling pathway that senses body-fluid sodium levels and controls salt intake behavior as well as voluntary water intake to regulate sodium homeostasis. This Rattus norvegicus (Rat) protein is Sodium/potassium-transporting ATPase subunit alpha-1 (Atp1a1).